Here is a 316-residue protein sequence, read N- to C-terminus: FAD:protein FMN transferase (316 aa).

Residues Met14, 88–90, and Asp146 contribute to the FAD site; that span reads AFN. A Mg(2+)-binding site is contributed by Ala149. Residues Lys152 and Leu231 each contribute to the FAD site. Asp257 and Thr261 together coordinate Mg(2+).

Belongs to the ApbE family. Mg(2+) serves as cofactor.

Its subcellular location is the cytoplasm. The enzyme catalyses L-threonyl-[protein] + FAD = FMN-L-threonyl-[protein] + AMP + H(+). Its function is as follows. Flavin transferase that catalyzes the transfer of the FMN moiety of FAD and its covalent binding to the hydroxyl group of a threonine residue in a target flavoprotein. Is responsible for the modification of the fumarate reductase KPK_2907. The protein is FAD:protein FMN transferase of Klebsiella pneumoniae (strain 342).